The chain runs to 340 residues: Heat-inducible transcription repressor HrcA (340 aa).

Belongs to the HrcA family.

Negative regulator of class I heat shock genes (grpE-dnaK-dnaJ and groELS operons). Prevents heat-shock induction of these operons. The chain is Heat-inducible transcription repressor HrcA from Phytoplasma australiense.